A 480-amino-acid chain; its full sequence is Glycogen synthase (480 aa).

Lys15 serves as a coordination point for ADP-alpha-D-glucose.

Belongs to the glycosyltransferase 1 family. Bacterial/plant glycogen synthase subfamily.

It catalyses the reaction [(1-&gt;4)-alpha-D-glucosyl](n) + ADP-alpha-D-glucose = [(1-&gt;4)-alpha-D-glucosyl](n+1) + ADP + H(+). It participates in glycan biosynthesis; glycogen biosynthesis. Its function is as follows. Synthesizes alpha-1,4-glucan chains using ADP-glucose. This chain is Glycogen synthase, found in Rhizobium tropici.